A 145-amino-acid polypeptide reads, in one-letter code: Putative sterol 14-demethylase-like protein (145 aa).

The chain crosses the membrane as a helical span at residues 5 to 25 (YYTLLKTSVAIIIVFVVAKLI).

Belongs to the cytochrome P450 family. Expressed specifically in roots.

It localises to the membrane. The polypeptide is Putative sterol 14-demethylase-like protein (CYP51G2) (Arabidopsis thaliana (Mouse-ear cress)).